Here is a 254-residue protein sequence, read N- to C-terminus: Alcohol dehydrogenase 1 (254 aa).

Residue 10 to 33 participates in NAD(+) binding; the sequence is FVAGLGGIGFDTSREIVKSGPKNL. Residue Ser-138 coordinates substrate. Tyr-151 functions as the Proton acceptor in the catalytic mechanism.

It belongs to the short-chain dehydrogenases/reductases (SDR) family. In terms of assembly, homodimer.

It catalyses the reaction a primary alcohol + NAD(+) = an aldehyde + NADH + H(+). The enzyme catalyses a secondary alcohol + NAD(+) = a ketone + NADH + H(+). The sequence is that of Alcohol dehydrogenase 1 (Adh1) from Drosophila navojoa (Fruit fly).